The sequence spans 432 residues: Adenylosuccinate synthetase (432 aa).

Residues 12–18 and 40–42 each bind GTP; these read GDEGKGK and GHT. Residue aspartate 13 is the Proton acceptor of the active site. Aspartate 13 and glycine 40 together coordinate Mg(2+). IMP-binding positions include 13 to 16, 38 to 41, threonine 132, arginine 146, glutamine 226, threonine 241, and arginine 305; these read DEGK and NAGH. Histidine 41 (proton donor) is an active-site residue. Residue 301-307 participates in substrate binding; it reads TVTGRKR. GTP contacts are provided by residues arginine 307, 333-335, and 415-417; these read KLD and STS.

This sequence belongs to the adenylosuccinate synthetase family. In terms of assembly, homodimer. Requires Mg(2+) as cofactor.

The protein resides in the cytoplasm. It carries out the reaction IMP + L-aspartate + GTP = N(6)-(1,2-dicarboxyethyl)-AMP + GDP + phosphate + 2 H(+). The protein operates within purine metabolism; AMP biosynthesis via de novo pathway; AMP from IMP: step 1/2. Functionally, plays an important role in the de novo pathway of purine nucleotide biosynthesis. Catalyzes the first committed step in the biosynthesis of AMP from IMP. The chain is Adenylosuccinate synthetase from Sinorhizobium fredii (strain NBRC 101917 / NGR234).